The chain runs to 158 residues: S-ribosylhomocysteine lyase (158 aa).

The Fe cation site is built by H54, H58, and C124.

It belongs to the LuxS family. As to quaternary structure, homodimer. It depends on Fe cation as a cofactor.

The catalysed reaction is S-(5-deoxy-D-ribos-5-yl)-L-homocysteine = (S)-4,5-dihydroxypentane-2,3-dione + L-homocysteine. In terms of biological role, involved in the synthesis of autoinducer 2 (AI-2) which is secreted by bacteria and is used to communicate both the cell density and the metabolic potential of the environment. The regulation of gene expression in response to changes in cell density is called quorum sensing. Catalyzes the transformation of S-ribosylhomocysteine (RHC) to homocysteine (HC) and 4,5-dihydroxy-2,3-pentadione (DPD). This chain is S-ribosylhomocysteine lyase, found in Lactobacillus gasseri (strain ATCC 33323 / DSM 20243 / BCRC 14619 / CIP 102991 / JCM 1131 / KCTC 3163 / NCIMB 11718 / NCTC 13722 / AM63).